We begin with the raw amino-acid sequence, 87 residues long: UPF0335 protein Meso_3367 (87 aa).

The protein belongs to the UPF0335 family.

This Chelativorans sp. (strain BNC1) protein is UPF0335 protein Meso_3367.